Reading from the N-terminus, the 416-residue chain is Gamma-glutamyl phosphate reductase (416 aa).

The protein belongs to the gamma-glutamyl phosphate reductase family.

It localises to the cytoplasm. It carries out the reaction L-glutamate 5-semialdehyde + phosphate + NADP(+) = L-glutamyl 5-phosphate + NADPH + H(+). Its pathway is amino-acid biosynthesis; L-proline biosynthesis; L-glutamate 5-semialdehyde from L-glutamate: step 2/2. Catalyzes the NADPH-dependent reduction of L-glutamate 5-phosphate into L-glutamate 5-semialdehyde and phosphate. The product spontaneously undergoes cyclization to form 1-pyrroline-5-carboxylate. In Leptospira interrogans serogroup Icterohaemorrhagiae serovar Lai (strain 56601), this protein is Gamma-glutamyl phosphate reductase.